The primary structure comprises 704 residues: Elongation factor G (704 aa).

The tr-type G domain occupies 8 to 291 (ANVRNIGIMA…AVIEYLPSPV (284 aa)). GTP-binding positions include 17–24 (AHIDAGKT), 90–94 (DTPGH), and 144–147 (NKMD).

This sequence belongs to the TRAFAC class translation factor GTPase superfamily. Classic translation factor GTPase family. EF-G/EF-2 subfamily.

The protein resides in the cytoplasm. Its function is as follows. Catalyzes the GTP-dependent ribosomal translocation step during translation elongation. During this step, the ribosome changes from the pre-translocational (PRE) to the post-translocational (POST) state as the newly formed A-site-bound peptidyl-tRNA and P-site-bound deacylated tRNA move to the P and E sites, respectively. Catalyzes the coordinated movement of the two tRNA molecules, the mRNA and conformational changes in the ribosome. This chain is Elongation factor G, found in Chlorobium phaeobacteroides (strain BS1).